A 98-amino-acid chain; its full sequence is Acylphosphatase (98 aa).

Residues 12–98 (TYYVRVRGVV…DKRFERFQQH (87 aa)) form the Acylphosphatase-like domain. Residues Arg27 and Asn45 contribute to the active site.

It belongs to the acylphosphatase family.

It catalyses the reaction an acyl phosphate + H2O = a carboxylate + phosphate + H(+). In Burkholderia mallei (strain NCTC 10247), this protein is Acylphosphatase (acyP).